Reading from the N-terminus, the 334-residue chain is Anthranilate phosphoribosyltransferase (334 aa).

5-phospho-alpha-D-ribose 1-diphosphate is bound by residues Gly79, 82–83 (GD), Ser87, 89–92 (NIST), 107–115 (KAGNRSISS), and Ser119. Gly79 lines the anthranilate pocket. Ser91 contributes to the Mg(2+) binding site. Residue Asn110 coordinates anthranilate. Residue Arg165 participates in anthranilate binding. 2 residues coordinate Mg(2+): Asp224 and Glu225.

Belongs to the anthranilate phosphoribosyltransferase family. As to quaternary structure, homodimer. Mg(2+) serves as cofactor.

The enzyme catalyses N-(5-phospho-beta-D-ribosyl)anthranilate + diphosphate = 5-phospho-alpha-D-ribose 1-diphosphate + anthranilate. The protein operates within amino-acid biosynthesis; L-tryptophan biosynthesis; L-tryptophan from chorismate: step 2/5. Functionally, catalyzes the transfer of the phosphoribosyl group of 5-phosphorylribose-1-pyrophosphate (PRPP) to anthranilate to yield N-(5'-phosphoribosyl)-anthranilate (PRA). The protein is Anthranilate phosphoribosyltransferase of Streptococcus thermophilus (strain CNRZ 1066).